A 773-amino-acid chain; its full sequence is FT-interacting protein 3 (773 aa).

The span at 1 to 16 shows a compositional bias: basic and acidic residues; the sequence is MQRPPPEDFSLKETRP. The tract at residues 1 to 24 is disordered; that stretch reads MQRPPPEDFSLKETRPHLGGGKLS. C2 domains lie at 22–142, 181–305, and 345–471; these read KLSG…PQWY, VSGT…SRWY, and YSSD…THSY. 5 residues coordinate Ca(2+): aspartate 55, aspartate 61, aspartate 108, aspartate 110, and aspartate 115. Helical transmembrane passes span 574–594, 608–628, and 716–736; these read IMGV…ICNW, IILV…LFLI, and LFVL…FQVV.

It belongs to the MCTP family. In terms of assembly, interacts with and regulates subcellular localization and trafficking of STM. Ca(2+) serves as cofactor. Accumulates in vascular tissues, leaf primordia and flowers. Highly expressed in roots meristems and in both vegetative and inflorescence shoot apical meristems (SAMs).

It is found in the endoplasmic reticulum membrane. The protein localises to the cytoplasm. It localises to the vesicle. The protein resides in the cell membrane. Its subcellular location is the endosome membrane. It is found in the golgi apparatus membrane. Functionally, required for proliferation and differentiation of shoot stem cells in the shoot apical meristem (SAM), thus determining the appropriate balance between the maintenance of shoot stem cells and their differentiation into other aboveground plant parts via the control of subcellular localization and intercellular trafficking of STM in the shoot apex. Prevents intracellular trafficking of STM to the plasma membrane in cells in the peripheral shoot meristem region thus facilitating STM recycling to the nucleus to maintain stem cells. May function as a signaling molecule by regulating the trafficking of other regulators. In Arabidopsis thaliana (Mouse-ear cress), this protein is FT-interacting protein 3.